A 350-amino-acid chain; its full sequence is Uroporphyrinogen decarboxylase (350 aa).

Substrate is bound by residues 28 to 32, F47, D78, Y155, S210, and H325; that span reads RQAGR.

This sequence belongs to the uroporphyrinogen decarboxylase family. As to quaternary structure, homodimer.

It is found in the cytoplasm. It catalyses the reaction uroporphyrinogen III + 4 H(+) = coproporphyrinogen III + 4 CO2. It participates in porphyrin-containing compound metabolism; protoporphyrin-IX biosynthesis; coproporphyrinogen-III from 5-aminolevulinate: step 4/4. Functionally, catalyzes the decarboxylation of four acetate groups of uroporphyrinogen-III to yield coproporphyrinogen-III. The sequence is that of Uroporphyrinogen decarboxylase from Synechocystis sp. (strain ATCC 27184 / PCC 6803 / Kazusa).